The chain runs to 120 residues: Large ribosomal subunit protein uL18 (120 aa).

The protein belongs to the universal ribosomal protein uL18 family. In terms of assembly, part of the 50S ribosomal subunit; part of the 5S rRNA/L5/L18/L25 subcomplex. Contacts the 5S and 23S rRNAs.

Its function is as follows. This is one of the proteins that bind and probably mediate the attachment of the 5S RNA into the large ribosomal subunit, where it forms part of the central protuberance. The chain is Large ribosomal subunit protein uL18 from Bordetella bronchiseptica (strain ATCC BAA-588 / NCTC 13252 / RB50) (Alcaligenes bronchisepticus).